Here is a 214-residue protein sequence, read N- to C-terminus: Auxin-binding protein ABP20 (214 aa).

Residues 1–23 (MPQATMIFPILFTFFLLLSSSNA) form the signal peptide. Cysteine 29 and cysteine 44 are oxidised to a cystine. Residues 58-204 (SGLGIAGNTS…TTFLDAAQIK (147 aa)) enclose the Cupin type-1 domain. Asparagine 65 carries N-linked (GlcNAc...) asparagine glycosylation. The Mn(2+) site is built by histidine 106, histidine 108, glutamate 113, and histidine 152.

This sequence belongs to the germin family. Interacts with ABP19.

It localises to the secreted. Its subcellular location is the extracellular space. The protein resides in the apoplast. The protein localises to the cell wall. Its function is as follows. Probable receptor for the plant growth-promoting hormone auxin. This is Auxin-binding protein ABP20 (ABP20) from Prunus persica (Peach).